Reading from the N-terminus, the 267-residue chain is U6 snRNA phosphodiesterase 1 (267 aa).

Polar residues predominate over residues 1–13 (MSSAPLVGYSSSG). The tract at residues 1–74 (MSSAPLVGYS…DSAKHGGRIR (74 aa)) is disordered. Catalysis depends on H122, which acts as the Proton acceptor. 122 to 124 (HVS) contributes to the AMP binding site. UMP is bound by residues Q166, Y204, and 208–212 (SFHIS). AMP contacts are provided by residues Y204 and 206-212 (DPSFHIS). H210 (proton donor) is an active-site residue.

This sequence belongs to the 2H phosphoesterase superfamily. USB1 family. In terms of assembly, interacts with PLRG1, CDC5L and PRPF19.

It is found in the nucleus. It catalyses the reaction a 3'-end uridylyl-uridine-RNA = a 3'-end 2',3'-cyclophospho-uridine-RNA + uridine. It carries out the reaction a 3'-end uridylyl-adenosine-RNA = a 3'-end 2',3'-cyclophospho-uridine-RNA + adenosine. Functionally, 3'-5' RNA exonuclease that trims the 3' end of oligo(U) and oligo(A) tracts of the pre-U6 small nuclear RNA (snRNA) molecule, leading to the formation of a mature U6 snRNA 3' end-terminated with a 2',3'-cyclic phosphate. Participates in the U6 snRNA 3' end processing that prevents U6 snRNA degradation. In addition also removes uridines from the 3' end of U6atac snRNA and possibly the vault RNA VTRNA1-1. The sequence is that of U6 snRNA phosphodiesterase 1 from Mus musculus (Mouse).